Reading from the N-terminus, the 406-residue chain is Probable sphingosine-1-phosphate phosphatase (406 aa).

A run of 2 helical transmembrane segments spans residues 66-86 (ILGE…CVAT) and 92-112 (LCVV…TFTL). The phosphatase sequence motif I stretch occupies residues 107-115 (KNTFTLPRP). Positions 133–136 (PSTH) are phosphatase sequence motif II. Residue histidine 136 is the Proton donor of the active site. 2 consecutive transmembrane segments (helical) span residues 138–158 (ASAF…FPTI) and 162–182 (FNIS…SVMF). Residues 183 to 194 (SRLYNGHHTPMD) are phosphatase sequence motif III. The active-site Nucleophile is the histidine 190. 5 helical membrane passes run 193–213 (MDVI…TYQL), 225–245 (TFLF…FFHP), 254–274 (AYPE…SLWL), 313–333 (ILIG…FFFF), and 374–394 (LFVY…FYYL).

Belongs to the type 2 lipid phosphate phosphatase family.

The protein localises to the endoplasmic reticulum membrane. Its function is as follows. Has enzymatic activity against both sphingosine 1 phosphate (S1P) and dihydro-S1P. Regulates intracellular and extracellular S1P levels. The polypeptide is Probable sphingosine-1-phosphate phosphatase (sppA) (Dictyostelium discoideum (Social amoeba)).